A 119-amino-acid chain; its full sequence is Large ribosomal subunit protein bL20 (119 aa).

It belongs to the bacterial ribosomal protein bL20 family.

Its function is as follows. Binds directly to 23S ribosomal RNA and is necessary for the in vitro assembly process of the 50S ribosomal subunit. It is not involved in the protein synthesizing functions of that subunit. This is Large ribosomal subunit protein bL20 from Streptococcus thermophilus (strain ATCC BAA-491 / LMD-9).